The primary structure comprises 220 residues: Dual specificity phosphatase 29 (220 aa).

The Tyrosine-protein phosphatase domain maps to 54–202 (HVNEVWPKLY…LRELDKQLVQ (149 aa)). Substrate is bound at residue 146–153 (HCVMGRSR). Cys-147 (phosphocysteine intermediate) is an active-site residue.

Belongs to the protein-tyrosine phosphatase family. Non-receptor class dual specificity subfamily. As to quaternary structure, homodimer. Interacts with PRKAA2.

It localises to the cytoplasm. The protein localises to the nucleus. It catalyses the reaction O-phospho-L-tyrosyl-[protein] + H2O = L-tyrosyl-[protein] + phosphate. It carries out the reaction O-phospho-L-seryl-[protein] + H2O = L-seryl-[protein] + phosphate. The catalysed reaction is O-phospho-L-threonyl-[protein] + H2O = L-threonyl-[protein] + phosphate. Its function is as follows. Dual specificity phosphatase able to dephosphorylate phosphotyrosine, phosphoserine and phosphothreonine residues within the same substrate, with a preference for phosphotyrosine as a substrate. Involved in the modulation of intracellular signaling cascades. In skeletal muscle regulates systemic glucose homeostasis by activating, AMPK, an energy sensor protein kinase. Affects MAP kinase signaling though modulation of the ERK1/2 cascade in skeletal muscle promoting muscle cell differentiation, development and atrophy. The polypeptide is Dual specificity phosphatase 29 (DUSP29) (Pan troglodytes (Chimpanzee)).